The chain runs to 170 residues: Adenine phosphoribosyltransferase (170 aa).

Belongs to the purine/pyrimidine phosphoribosyltransferase family. In terms of assembly, homodimer.

It is found in the cytoplasm. The enzyme catalyses AMP + diphosphate = 5-phospho-alpha-D-ribose 1-diphosphate + adenine. Its pathway is purine metabolism; AMP biosynthesis via salvage pathway; AMP from adenine: step 1/1. In terms of biological role, catalyzes a salvage reaction resulting in the formation of AMP, that is energically less costly than de novo synthesis. In Alkaliphilus metalliredigens (strain QYMF), this protein is Adenine phosphoribosyltransferase.